The primary structure comprises 305 residues: tRNA dimethylallyltransferase (305 aa).

9-16 (GPTAVGKT) lines the ATP pocket. 11-16 (TAVGKT) contacts substrate. Residues 34–37 (DSRQ) are interaction with substrate tRNA.

This sequence belongs to the IPP transferase family. Monomer. Mg(2+) is required as a cofactor.

It carries out the reaction adenosine(37) in tRNA + dimethylallyl diphosphate = N(6)-dimethylallyladenosine(37) in tRNA + diphosphate. Functionally, catalyzes the transfer of a dimethylallyl group onto the adenine at position 37 in tRNAs that read codons beginning with uridine, leading to the formation of N6-(dimethylallyl)adenosine (i(6)A). The polypeptide is tRNA dimethylallyltransferase (Roseiflexus sp. (strain RS-1)).